A 99-amino-acid chain; its full sequence is Plastocyanin (99 aa).

The region spanning 1-99 is the Plastocyanin-like domain; sequence VEVLMGGSGG…IGMSGIVTVN (99 aa). Residues His37, Cys84, His87, and Met92 each coordinate Cu cation.

This sequence belongs to the plastocyanin family. Cu(2+) is required as a cofactor.

It is found in the plastid. Its subcellular location is the chloroplast thylakoid membrane. Participates in electron transfer between P700 and the cytochrome b6-f complex in photosystem I. The polypeptide is Plastocyanin (PETE) (Ginkgo biloba (Ginkgo)).